The primary structure comprises 200 residues: Lipopolysaccharide core heptose(II)-phosphate phosphatase (200 aa).

The N-terminal stretch at 1 to 25 is a signal peptide; the sequence is MLAFCRSSLKSKKYFIILLALAAIA.

Belongs to the phosphoglycerate mutase family. Ais subfamily.

It is found in the periplasm. It functions in the pathway bacterial outer membrane biogenesis; lipopolysaccharide metabolism. Its function is as follows. Catalyzes the dephosphorylation of heptose(II) of the outer membrane lipopolysaccharide core. The chain is Lipopolysaccharide core heptose(II)-phosphate phosphatase from Escherichia coli O6:K15:H31 (strain 536 / UPEC).